Reading from the N-terminus, the 507-residue chain is Xylose import ATP-binding protein XylG (507 aa).

ABC transporter domains follow at residues 5 to 242 and 259 to 504; these read LKMT…VGRE and LEVK…LSEK. 37–44 is an ATP binding site; it reads GENGSGKS.

It belongs to the ABC transporter superfamily. Xylose importer (TC 3.A.1.2.4) family. As to quaternary structure, the complex is composed of two ATP-binding proteins (XylG), two transmembrane proteins (XylH) and a solute-binding protein (XylF).

Its subcellular location is the cell inner membrane. It carries out the reaction D-xylose(out) + ATP + H2O = D-xylose(in) + ADP + phosphate + H(+). In terms of biological role, part of the ABC transporter complex XylFGH involved in xylose import. Responsible for energy coupling to the transport system. This Photobacterium profundum (strain SS9) protein is Xylose import ATP-binding protein XylG.